A 374-amino-acid chain; its full sequence is Putative glutamate--cysteine ligase 2 (374 aa).

It belongs to the glutamate--cysteine ligase type 2 family. YbdK subfamily.

It carries out the reaction L-cysteine + L-glutamate + ATP = gamma-L-glutamyl-L-cysteine + ADP + phosphate + H(+). Functionally, ATP-dependent carboxylate-amine ligase which exhibits weak glutamate--cysteine ligase activity. The sequence is that of Putative glutamate--cysteine ligase 2 from Acidovorax sp. (strain JS42).